We begin with the raw amino-acid sequence, 258 residues long: Imidazole glycerol phosphate synthase subunit HisF (258 aa).

Active-site residues include Asp11 and Asp130.

Belongs to the HisA/HisF family. As to quaternary structure, heterodimer of HisH and HisF.

Its subcellular location is the cytoplasm. It catalyses the reaction 5-[(5-phospho-1-deoxy-D-ribulos-1-ylimino)methylamino]-1-(5-phospho-beta-D-ribosyl)imidazole-4-carboxamide + L-glutamine = D-erythro-1-(imidazol-4-yl)glycerol 3-phosphate + 5-amino-1-(5-phospho-beta-D-ribosyl)imidazole-4-carboxamide + L-glutamate + H(+). It participates in amino-acid biosynthesis; L-histidine biosynthesis; L-histidine from 5-phospho-alpha-D-ribose 1-diphosphate: step 5/9. In terms of biological role, IGPS catalyzes the conversion of PRFAR and glutamine to IGP, AICAR and glutamate. The HisF subunit catalyzes the cyclization activity that produces IGP and AICAR from PRFAR using the ammonia provided by the HisH subunit. In Nitrobacter winogradskyi (strain ATCC 25391 / DSM 10237 / CIP 104748 / NCIMB 11846 / Nb-255), this protein is Imidazole glycerol phosphate synthase subunit HisF.